A 147-amino-acid polypeptide reads, in one-letter code: 3-dehydroquinate dehydratase (147 aa).

The Proton acceptor role is filled by Y22. 3 residues coordinate substrate: N74, H80, and D87. H101 (proton donor) is an active-site residue. Substrate is bound by residues 102 to 103 (IS) and R112.

The protein belongs to the type-II 3-dehydroquinase family. As to quaternary structure, homododecamer.

It catalyses the reaction 3-dehydroquinate = 3-dehydroshikimate + H2O. Its pathway is metabolic intermediate biosynthesis; chorismate biosynthesis; chorismate from D-erythrose 4-phosphate and phosphoenolpyruvate: step 3/7. Its function is as follows. Catalyzes a trans-dehydration via an enolate intermediate. The sequence is that of 3-dehydroquinate dehydratase from Lachnospira eligens (strain ATCC 27750 / DSM 3376 / VPI C15-48 / C15-B4) (Eubacterium eligens).